The following is a 360-amino-acid chain: Nodulin-44 (360 aa).

The signal sequence occupies residues 1–23; that stretch reads MEEKILMRVIVITVFLFIGAATA. 2 disordered regions span residues 123 to 148 and 228 to 249; these read FSPR…VIPL and FSPR…TLGR.

The protein belongs to the nodulin 20 family.

This is Nodulin-44 from Glycine max (Soybean).